The sequence spans 648 residues: Macrolide export ATP-binding/permease protein MacB (648 aa).

The ABC transporter domain maps to 6–251 (IRVRGVSRAF…GPSAGWRGAI (246 aa)). Residue 42–49 (GASGSGKS) coordinates ATP. 4 helical membrane passes run 273 to 293 (LLTM…SALG), 528 to 548 (VAVI…LVSV), 572 to 592 (FLIE…MLAL), and 613 to 633 (SIIV…FLPA).

Belongs to the ABC transporter superfamily. Macrolide exporter (TC 3.A.1.122) family. In terms of assembly, homodimer.

It localises to the cell inner membrane. Non-canonical ABC transporter that contains transmembrane domains (TMD), which form a pore in the inner membrane, and an ATP-binding domain (NBD), which is responsible for energy generation. Confers resistance against macrolides. This chain is Macrolide export ATP-binding/permease protein MacB, found in Agrobacterium fabrum (strain C58 / ATCC 33970) (Agrobacterium tumefaciens (strain C58)).